Consider the following 321-residue polypeptide: tRNA U34 carboxymethyltransferase (321 aa).

Residues Lys90, Trp104, Lys109, Gly129, 151–153 (DPT), 180–181 (IE), Met195, Tyr199, and Arg314 each bind carboxy-S-adenosyl-L-methionine.

This sequence belongs to the class I-like SAM-binding methyltransferase superfamily. CmoB family. Homotetramer.

It carries out the reaction carboxy-S-adenosyl-L-methionine + 5-hydroxyuridine(34) in tRNA = 5-carboxymethoxyuridine(34) in tRNA + S-adenosyl-L-homocysteine + H(+). In terms of biological role, catalyzes carboxymethyl transfer from carboxy-S-adenosyl-L-methionine (Cx-SAM) to 5-hydroxyuridine (ho5U) to form 5-carboxymethoxyuridine (cmo5U) at position 34 in tRNAs. This Histophilus somni (strain 2336) (Haemophilus somnus) protein is tRNA U34 carboxymethyltransferase.